The sequence spans 429 residues: 3-phosphoshikimate 1-carboxyvinyltransferase (429 aa).

Positions 23, 24, and 28 each coordinate 3-phosphoshikimate. Lys-23 is a binding site for phosphoenolpyruvate. The phosphoenolpyruvate site is built by Gly-95 and Arg-123. Residues Ser-168, Gln-170, Asp-316, and Lys-343 each contribute to the 3-phosphoshikimate site. Residue Gln-170 participates in phosphoenolpyruvate binding. Asp-316 serves as the catalytic Proton acceptor. Phosphoenolpyruvate is bound by residues Arg-347 and Arg-389.

This sequence belongs to the EPSP synthase family. Monomer.

Its subcellular location is the cytoplasm. The enzyme catalyses 3-phosphoshikimate + phosphoenolpyruvate = 5-O-(1-carboxyvinyl)-3-phosphoshikimate + phosphate. It functions in the pathway metabolic intermediate biosynthesis; chorismate biosynthesis; chorismate from D-erythrose 4-phosphate and phosphoenolpyruvate: step 6/7. Functionally, catalyzes the transfer of the enolpyruvyl moiety of phosphoenolpyruvate (PEP) to the 5-hydroxyl of shikimate-3-phosphate (S3P) to produce enolpyruvyl shikimate-3-phosphate and inorganic phosphate. The sequence is that of 3-phosphoshikimate 1-carboxyvinyltransferase from Bacillus cereus (strain 03BB102).